The sequence spans 644 residues: Cyclin-dependent kinase C-2 C (644 aa).

The 285-residue stretch at 105–389 (FQKLEKIGQG…ASSALNSEYF (285 aa)) folds into the Protein kinase domain. Residues 111-119 (IGQGTYSSV) and lysine 134 contribute to the ATP site. Tyrosine 116 is modified (phosphotyrosine). Aspartate 229 serves as the catalytic Proton acceptor. Threonine 263 is subject to Phosphothreonine. Positions 420–427 (RKRANLKL) match the Nuclear localization signal motif. Residues 565 to 576 (SKLSRIGERHGS) show a composition bias toward basic and acidic residues. Residues 565–591 (SKLSRIGERHGSLDGSGLDFSQREEDS) form a disordered region.

It belongs to the protein kinase superfamily. CMGC Ser/Thr protein kinase family. CDC2/CDKX subfamily. Post-translationally, autophosphorylated. Expressed specifically in flowers and pollen.

The protein resides in the nucleus. The polypeptide is Cyclin-dependent kinase C-2 C (Arabidopsis thaliana (Mouse-ear cress)).